Here is an 837-residue protein sequence, read N- to C-terminus: Granulocyte colony-stimulating factor receptor (837 aa).

An N-terminal signal peptide occupies residues 1 to 25; it reads MVGLGACTLTGVTLIFLLLPRSLES. 2 cysteine pairs are disulfide-bonded: Cys26–Cys52 and Cys46–Cys102. Residues 26–118 form the Ig-like C2-type domain; sequence CGHIEISPPV…SVQLLDQAEL (93 aa). The Extracellular segment spans residues 26–626; the sequence is CGHIEISPPV…LTLRTLDPSD (601 aa). N-linked (GlcNAc...) asparagine glycosylation is found at Asn51, Asn94, and Asn129. Fibronectin type-III domains are found at residues 126–231, 236–331, 334–433, 434–529, and 530–624; these read SPSN…LEPP, LDIG…LRPT, APTI…NEGP, AVTG…GERA, and PPHA…TLDP. Intrachain disulfides connect Cys132-Cys143, Cys168-Cys219, Cys178-Cys187, Cys249-Cys296, and Cys267-Cys310. N-linked (GlcNAc...) asparagine glycosylation is found at Asn186 and Asn279. The WSXWS motif signature appears at 319–323; sequence WSPWS. 6 N-linked (GlcNAc...) asparagine glycosylation sites follow: Asn392, Asn408, Asn474, Asn487, Asn582, and Asn613. The chain crosses the membrane as a helical span at residues 627-650; sequence LNIFLGILCLVLLSTTCVVTWLCC. At 651–837 the chain is on the cytoplasmic side; sequence KRRGKTSFWS…VHGVEEQGGF (187 aa). The short motif at 658–666 is the Box 1 motif element; sequence FWSDVPDPA.

The protein belongs to the type I cytokine receptor family. Type 2 subfamily. As to quaternary structure, homodimer. The dimeric receptor binds two CSF3 molecules. Interacts with CEACAM1; down-regulates the CSF3R-STAT3 pathway through recruitment of PTPN6 that dephosphorylates CSF3R. Post-translationally, N-glycosylated. In terms of tissue distribution, found in bone marrow.

The protein localises to the membrane. In terms of biological role, receptor for granulocyte colony-stimulating factor (CSF3). In addition it may function in some adhesion or recognition events at the cell surface. The polypeptide is Granulocyte colony-stimulating factor receptor (Csf3r) (Mus musculus (Mouse)).